The primary structure comprises 1195 residues: Chromosome partition protein Smc (1195 aa).

An ATP-binding site is contributed by 33–40 (PNGSGKSN). Coiled-coil stretches lie at residues 185 to 241 (GVAQ…RQEQ), 273 to 348 (DAAT…IQAL), and 380 to 528 (QYQQ…QETQ). An SMC hinge domain is found at 542–658 (PGVHGLVAQL…FERLDQARRY (117 aa)). Residues 698–1043 (GESAEVRAIR…ELLLRIENFT (346 aa)) are a coiled coil.

This sequence belongs to the SMC family. Homodimer.

It is found in the cytoplasm. In terms of biological role, required for chromosome condensation and partitioning. The chain is Chromosome partition protein Smc from Synechococcus sp. (strain ATCC 27144 / PCC 6301 / SAUG 1402/1) (Anacystis nidulans).